Consider the following 396-residue polypeptide: 2-methyl-aconitate isomerase (396 aa).

Substrate-binding positions include Ser-19 and 66-70 (SSTSK). The active-site Proton donor/acceptor is the Cys-104. Cysteine sulfinic acid (-SO2H) is present on Cys-104. 4 residues coordinate substrate: Asn-106, Lys-278, Ser-309, and His-314. Met-318 acts as the Proton donor/acceptor in catalysis. Gly-319 lines the substrate pocket.

It belongs to the PrpF family. In terms of assembly, homodimer.

The enzyme catalyses 2-methyl-trans-aconitate = 2-methyl-cis-aconitate. It participates in organic acid metabolism; propanoate degradation. In terms of biological role, catalyzes the isomerization of 2-methyl-trans-aconitate to yield 2-methyl-cis-aconitate through a base-catalyzed proton abstraction coupled with a rotation about C2-C3 bond of 2-methyl-aconitate. The polypeptide is 2-methyl-aconitate isomerase (Cupriavidus necator (Alcaligenes eutrophus)).